The sequence spans 281 residues: Ribosomal protein L11 methyltransferase (281 aa).

Residues Thr-133, Gly-154, Asp-175, and Asn-216 each coordinate S-adenosyl-L-methionine.

This sequence belongs to the methyltransferase superfamily. PrmA family.

The protein localises to the cytoplasm. It carries out the reaction L-lysyl-[protein] + 3 S-adenosyl-L-methionine = N(6),N(6),N(6)-trimethyl-L-lysyl-[protein] + 3 S-adenosyl-L-homocysteine + 3 H(+). In terms of biological role, methylates ribosomal protein L11. The sequence is that of Ribosomal protein L11 methyltransferase from Campylobacter jejuni subsp. jejuni serotype O:2 (strain ATCC 700819 / NCTC 11168).